The following is a 420-amino-acid chain: Exodeoxyribonuclease 7 large subunit (420 aa).

The protein belongs to the XseA family. As to quaternary structure, heterooligomer composed of large and small subunits.

The protein localises to the cytoplasm. The enzyme catalyses Exonucleolytic cleavage in either 5'- to 3'- or 3'- to 5'-direction to yield nucleoside 5'-phosphates.. Functionally, bidirectionally degrades single-stranded DNA into large acid-insoluble oligonucleotides, which are then degraded further into small acid-soluble oligonucleotides. In Helicobacter pylori (strain Shi470), this protein is Exodeoxyribonuclease 7 large subunit.